Reading from the N-terminus, the 599-residue chain is Beta-(1--&gt;2)glucan export ATP-binding/permease protein NdvA (599 aa).

Positions 21-311 (GWILAVANLL…VVNFINNVLM (291 aa)) constitute an ABC transmembrane type-1 domain. 6 helical membrane-spanning segments follow: residues 22–42 (WILAVANLLLATAQFAEPILF), 68–88 (LLGAWVGFGLFTIMCSALVAL), 146–166 (EHFAAILSLVVLLPLSLYINW), 168–188 (LAILLFVLCIVFTVLTTLVVH), 254–274 (VITRASTTITVLSIFALGIYL), and 276–296 (QQGLTSVGEIVMFVSFATLLI). One can recognise an ABC transporter domain in the interval 345–579 (VEFQNVSFSY…GGAFAQLARA (235 aa)). Residue 378-385 (GATGAGKS) coordinates ATP.

The protein belongs to the ABC transporter superfamily. Beta-(1--&gt;2)glucan exporter (TC 3.A.1.108.1) family. In terms of assembly, homodimer.

It is found in the cell inner membrane. It carries out the reaction [(1-&gt;2)-beta-D-glucosyl](n)(in) + ATP + H2O = [(1-&gt;2)-beta-D-glucosyl](n)(out) + ADP + phosphate + H(+). Involved in beta-(1--&gt;2)glucan export. Transmembrane domains (TMD) form a pore in the inner membrane and the ATP-binding domain (NBD) is responsible for energy generation. This Rhodopseudomonas palustris (strain ATCC BAA-98 / CGA009) protein is Beta-(1--&gt;2)glucan export ATP-binding/permease protein NdvA.